The following is a 261-amino-acid chain: Hydroxyethylthiazole kinase (261 aa).

Substrate is bound at residue Met40. 2 residues coordinate ATP: Lys116 and Thr162. Gly189 is a substrate binding site.

This sequence belongs to the Thz kinase family. It depends on Mg(2+) as a cofactor.

It catalyses the reaction 5-(2-hydroxyethyl)-4-methylthiazole + ATP = 4-methyl-5-(2-phosphooxyethyl)-thiazole + ADP + H(+). It participates in cofactor biosynthesis; thiamine diphosphate biosynthesis; 4-methyl-5-(2-phosphoethyl)-thiazole from 5-(2-hydroxyethyl)-4-methylthiazole: step 1/1. In terms of biological role, catalyzes the phosphorylation of the hydroxyl group of 4-methyl-5-beta-hydroxyethylthiazole (THZ). The sequence is that of Hydroxyethylthiazole kinase from Methanosarcina mazei (strain ATCC BAA-159 / DSM 3647 / Goe1 / Go1 / JCM 11833 / OCM 88) (Methanosarcina frisia).